A 139-amino-acid chain; its full sequence is MFCTFCLKDRNYYMFKLFKDYWPTCTTECQICLEKIDDNGGIVAMPDTGMLNLEKMFHEQCIQRWRREHTRDPFNRVIKYYFNFPPKTLEECNVMLRETKGSIGDHEIDRVYKRVYQRVTQEDALDIELDFRHFFKMQS.

The protein resides in the host cytoplasm. The protein localises to the host nucleus. Its function is as follows. Plays a role in nucleocapsid assembly. The polypeptide is Protein AC53 (AC53) (Lepidoptera (butterflies and moths)).